A 139-amino-acid polypeptide reads, in one-letter code: 3-hydroxyacyl-[acyl-carrier-protein] dehydratase FabZ (139 aa).

H46 is a catalytic residue.

It belongs to the thioester dehydratase family. FabZ subfamily.

It is found in the cytoplasm. It carries out the reaction a (3R)-hydroxyacyl-[ACP] = a (2E)-enoyl-[ACP] + H2O. In terms of biological role, involved in unsaturated fatty acids biosynthesis. Catalyzes the dehydration of short chain beta-hydroxyacyl-ACPs and long chain saturated and unsaturated beta-hydroxyacyl-ACPs. This is 3-hydroxyacyl-[acyl-carrier-protein] dehydratase FabZ from Streptococcus pyogenes serotype M3 (strain ATCC BAA-595 / MGAS315).